The sequence spans 1433 residues: MDQELMDFFDFSKEFVRKQAPRGHVSSNVHAFVTESEELEKPIKREIVGKDYVKSFVEKEKERMNGIFSSDEMAPMRNKSLDDMDSDEEYEASPEIRTDAEFYEKYYFNLNRDKSLPIYAKREEIINAINENPVVIVKGETGCGKTTQVPQYILDEGFKSKQYCNIVVTQPRRIAAISIANRVCQERQWQRGTVCGYQVGLHRQLERFADTRLLYCTTGVLLNILVNNKTLTHYTHIVLDEVHERGQEMDFLLIVIRRLLATNSRHVKVILMSATINPRELSDYFANERSAPPVIDASYGRNFTVEKYYRDQLQTINWEGHQEDINSPGITQEGYRSAIKTILVIDNMERNERSTGKSYNQSLREGSILIFLPGVGEINNMSDMLKDMANHDSIMKFNMVRCHSLMSSDDQREIFQPSPPGYRKIIMATNVAESSITVPDVSYIIDFCLEKVLFTDTFTNFSSLRLVWASKTNCRQRAGRVGRLRNGRVYRMVTKSFYQRELSEYSVPEMLRSPLQNCVLKAKELKMGTPVEMLALALSPPNLSDICNTILLLKEVGALFPTVDGTYDPCDGDITYWGTIMSKLPLDTRLSRLIILGYIFNLLDEAIIIAAGLTVRGIFVDSTRLGSDNYWMHYVFADGSGSDLVGIWRVYLTYLNMCENGLQKDASIQWAKRFHLSLRALSEMNLLVLDLRLRCEKLSLLPLNFPISRISDDSEKAIMLKVIIAGSFYPNYFVQSKSTSGDDRNMFSVISGLDPCRTVYFTSFTDRTMGELYTRKVKQLFPETQIPPENMDVTFGQGSEKIFVTFKNDIYKPEGTTYVHVPGRIKAEVYKALRLRTYCNHHSLRVMEPMSALKYVKDKKIGKVVEGRWIPPSKPVAVELLALPSVFDKIIVGRITNIVSCGKFFFQPESFENCIANMSEHFNNPQQLQNCVRNAGAITKGLMLLAKRQGKYQRATVVRVDTQNSSNVRFYVRFVDYGDIERLPMTQLRLMSQDLLRHYRDLPPRLFECRLALVQPASMVSTYNAWPQKADDMLHALAKGGRVQLEIYSLVQNVAAVMIHLREGNLNELLVKEKLARRTNEDYMSRVDHDFRMRKQECRGYVSQQERQQVNEEYLRSKQLPQDMDLSPPPPQECKSLIILKGPFSTLESTVFSTMQSGMSKTVRIDPCSVNFVLLDTEPQDQHAKMVVAASISSAGRHNDVLTLRSTSIMPNIPGFAAIMTLIFCPRAQLNANTANSRYVSILAGLGYHPQTMKSYYEDHDLVINLDVNIDEHDVLLINQIRYMMDSVFFNLEGELRPIAGHADRVLIHDTIYRALNRLLSKNRNFIVCNPKSSDYVWQDMEESGEPDPQPYGRRSIFPMHTIPELHEENMDTVLDLIANCKEMYDYRNFEGSFDPMTCRLCKQYLESVSELRLHLLTQLHLDREKEVGYPMD.

One can recognise a Helicase ATP-binding domain in the interval 126–294; that stretch reads INAINENPVV…FANERSAPPV (169 aa). ATP is bound at residue 139-146; the sequence is GETGCGKT. The DEAH box signature appears at 240-243; sequence DEVH. The 172-residue stretch at 355–526 folds into the Helicase C-terminal domain; sequence TGKSYNQSLR…NCVLKAKELK (172 aa). The Tudor domain occupies 935–998; the sequence is AGAITKGLML…RLMSQDLLRH (64 aa).

It belongs to the DEAD box helicase family. DEAH subfamily.

Its subcellular location is the cytoplasm. It catalyses the reaction ATP + H2O = ADP + phosphate + H(+). In terms of biological role, probable ATP-binding RNA helicase which plays a central role during spermatogenesis and oogenesis by repressing transposable elements and preventing their mobilization, which is essential for the germline integrity. Acts via the piRNA metabolic process, which mediates the repression of transposable elements during meiosis by forming complexes composed of piRNAs and Piwi and govern the methylation and subsequent repression of transposons. Involved in the repression of LTR retrotransposon copia. Also involved in telomere regulation by repressing specialized telomeric retroelements HeT-A, TAHRE, and TART; Drosophila telomeres being maintained by transposition of specialized telomeric retroelements. Involved in telomeric trans-silencing, a repression mechanism by which a transposon or a transgene inserted in subtelomeric heterochromatin has the capacity to repress in trans in the female germline, a homologous transposon, or transgene located in euchromatin. Involved in the repression of testis-expressed Stellate genes by the homologous Su(Ste) repeats. Required for anteroposterior and dorsoventral axis formation during oogenesis. The protein is Probable ATP-dependent RNA helicase spindle-E (spn-E) of Drosophila pseudoobscura pseudoobscura (Fruit fly).